Reading from the N-terminus, the 61-residue chain is Bacteriocin sakacin-P (61 aa).

The propeptide occupies 1 to 18 (MEKFIELSLKEVTAITGG). C27 and C32 are oxidised to a cystine.

Belongs to the bacteriocin class IIA/YGNGV family.

The protein localises to the secreted. Functionally, bactericidal activity; inhibits closely related Lactobacilli, Listeria monocytogenes and ivanovvi, Enterococcus faecalis, Carnobacterium sp and Brocothrix thermosphacta. In Latilactobacillus sakei (Lactobacillus sakei), this protein is Bacteriocin sakacin-P (sakP).